The primary structure comprises 211 residues: uncharacterized protein (211 aa).

His-54, His-56, Asp-58, His-59, His-129, Asp-148, and His-189 together coordinate Zn(2+).

The protein belongs to the metallo-beta-lactamase superfamily. Glyoxalase II family. It depends on Zn(2+) as a cofactor.

This is an uncharacterized protein from Aquifex aeolicus (strain VF5).